Consider the following 601-residue polypeptide: Alpha-terpineol synthase, chloroplastic (601 aa).

The transit peptide at 1–47 (MSTISIHHVGILRNPLHSKSKRASINKPWSLSLPRSSSASRLVEPCR) directs the protein to the chloroplast. Residues Asp-357 and Asp-361 each coordinate Mn(2+). The DDXXD motif motif lies at 357–361 (DDVYD). Homodimerization stretches follow at residues 363 to 369 (YGTLDEL) and 435 to 471 (EAEW…ELSL). Mn(2+)-binding residues include Asp-499 and Glu-507.

This sequence belongs to the terpene synthase family. As to quaternary structure, homodimer. It depends on Mn(2+) as a cofactor. Requires Mg(2+) as cofactor.

Its subcellular location is the plastid. The protein resides in the chloroplast. The catalysed reaction is (2E)-geranyl diphosphate + H2O = (S)-alpha-terpineol + diphosphate. The enzyme catalyses (2E)-geranyl diphosphate + H2O = (R)-alpha-terpineol + diphosphate. Its pathway is secondary metabolite biosynthesis; terpenoid biosynthesis. Functionally, involved in the biosynthesis of phenolic monoterpenes natural products. Monoterpene synthase which catalyzes the conversion of geranyl diphosphate (GPP) to alpha-terpineol (isomer is not determined). This is Alpha-terpineol synthase, chloroplastic from Thymus caespititius (Cretan thyme).